Reading from the N-terminus, the 389-residue chain is uncharacterized protein (389 aa).

4 helical membrane-spanning segments follow: residues 31–51, 96–116, 123–143, and 152–172; these read LFIV…VEVI, IMQI…ALLV, APLV…MFPP, and MIDA…LPSS.

The protein to M.tuberculosis Rv2571c.

The protein resides in the cell membrane. This is an uncharacterized protein from Corynebacterium glutamicum (strain ATCC 13032 / DSM 20300 / JCM 1318 / BCRC 11384 / CCUG 27702 / LMG 3730 / NBRC 12168 / NCIMB 10025 / NRRL B-2784 / 534).